Consider the following 207-residue polypeptide: Venom allergen 5 (207 aa).

Disulfide bonds link C4-C16, C8-C105, and C29-C97. Positions 49-192 constitute an SCP domain; it reads DEHNRFRQKV…MKSHYLVCNY (144 aa). Y111 carries the post-translational modification Phosphotyrosine. K141 carries an N-linked (Glc) (glycation) lysine glycan. A disulfide bridge links C173 with C190.

The protein belongs to the CRISP family. Venom allergen 5-like subfamily. Glycosylated. Expressed by the venom gland.

It localises to the secreted. This chain is Venom allergen 5, found in Polybia paulista (Neotropical social wasp).